The primary structure comprises 140 residues: Transcription antitermination protein NusB (140 aa).

Belongs to the NusB family.

Functionally, involved in transcription antitermination. Required for transcription of ribosomal RNA (rRNA) genes. Binds specifically to the boxA antiterminator sequence of the ribosomal RNA (rrn) operons. The sequence is that of Transcription antitermination protein NusB from Pseudoalteromonas atlantica (strain T6c / ATCC BAA-1087).